Reading from the N-terminus, the 63-residue chain is Large ribosomal subunit protein bL28 (63 aa).

Belongs to the bacterial ribosomal protein bL28 family.

The sequence is that of Large ribosomal subunit protein bL28 from Thermomicrobium roseum (strain ATCC 27502 / DSM 5159 / P-2).